We begin with the raw amino-acid sequence, 134 residues long: 15.4 kDa class V heat shock protein (134 aa).

One can recognise a sHSP domain in the interval 19 to 126 (SLNNYQENHV…LIDPSDVPES (108 aa)).

The protein belongs to the small heat shock protein (HSP20) family. May form oligomeric structures.

It is found in the cytoplasm. The chain is 15.4 kDa class V heat shock protein (HSP15.4) from Arabidopsis thaliana (Mouse-ear cress).